Consider the following 378-residue polypeptide: Succinyl-diaminopimelate desuccinylase (378 aa).

A Zn(2+)-binding site is contributed by histidine 68. Aspartate 70 is a catalytic residue. Aspartate 101 serves as a coordination point for Zn(2+). Catalysis depends on glutamate 135, which acts as the Proton acceptor. Zn(2+) contacts are provided by glutamate 136, glutamate 164, and histidine 350.

Belongs to the peptidase M20A family. DapE subfamily. As to quaternary structure, homodimer. Zn(2+) serves as cofactor. Requires Co(2+) as cofactor.

The catalysed reaction is N-succinyl-(2S,6S)-2,6-diaminopimelate + H2O = (2S,6S)-2,6-diaminopimelate + succinate. Its pathway is amino-acid biosynthesis; L-lysine biosynthesis via DAP pathway; LL-2,6-diaminopimelate from (S)-tetrahydrodipicolinate (succinylase route): step 3/3. In terms of biological role, catalyzes the hydrolysis of N-succinyl-L,L-diaminopimelic acid (SDAP), forming succinate and LL-2,6-diaminopimelate (DAP), an intermediate involved in the bacterial biosynthesis of lysine and meso-diaminopimelic acid, an essential component of bacterial cell walls. The polypeptide is Succinyl-diaminopimelate desuccinylase (Vibrio campbellii (strain ATCC BAA-1116)).